A 384-amino-acid chain; its full sequence is Ribonucleoside-diphosphate reductase small chain (384 aa).

Residues Asp130, Glu161, and His164 each coordinate Fe cation. Residue Tyr168 is part of the active site. Positions 224, 258, and 261 each coordinate Fe cation.

It belongs to the ribonucleoside diphosphate reductase small chain family. Heterodimer of a large and a small subunit. Fe cation is required as a cofactor.

It carries out the reaction a 2'-deoxyribonucleoside 5'-diphosphate + [thioredoxin]-disulfide + H2O = a ribonucleoside 5'-diphosphate + [thioredoxin]-dithiol. Functionally, provides the precursors necessary for DNA synthesis. Catalyzes the biosynthesis of deoxyribonucleotides from the corresponding ribonucleotides. This Spisula solidissima (Atlantic surf-clam) protein is Ribonucleoside-diphosphate reductase small chain.